Consider the following 336-residue polypeptide: Probable deoxyhypusine synthase (336 aa).

K308 functions as the Nucleophile in the catalytic mechanism.

The protein belongs to the deoxyhypusine synthase family. It depends on NAD(+) as a cofactor.

The enzyme catalyses [eIF5A protein]-L-lysine + spermidine = [eIF5A protein]-deoxyhypusine + propane-1,3-diamine. Its pathway is protein modification; eIF5A hypusination. Functionally, catalyzes the NAD-dependent oxidative cleavage of spermidine and the subsequent transfer of the butylamine moiety of spermidine to the epsilon-amino group of a specific lysine residue of the eIF-5A precursor protein to form the intermediate deoxyhypusine residue. This is Probable deoxyhypusine synthase from Pyrococcus furiosus (strain ATCC 43587 / DSM 3638 / JCM 8422 / Vc1).